Consider the following 125-residue polypeptide: Small ribosomal subunit protein uS13 (125 aa).

Belongs to the universal ribosomal protein uS13 family. In terms of assembly, part of the 30S ribosomal subunit. Forms a loose heterodimer with protein S19. Forms two bridges to the 50S subunit in the 70S ribosome.

Its function is as follows. Located at the top of the head of the 30S subunit, it contacts several helices of the 16S rRNA. In the 70S ribosome it contacts the 23S rRNA (bridge B1a) and protein L5 of the 50S subunit (bridge B1b), connecting the 2 subunits; these bridges are implicated in subunit movement. Contacts the tRNAs in the A and P-sites. The protein is Small ribosomal subunit protein uS13 of Granulibacter bethesdensis (strain ATCC BAA-1260 / CGDNIH1).